An 84-amino-acid chain; its full sequence is Cell division topological specificity factor (84 aa).

Belongs to the MinE family.

Functionally, prevents the cell division inhibition by proteins MinC and MinD at internal division sites while permitting inhibition at polar sites. This ensures cell division at the proper site by restricting the formation of a division septum at the midpoint of the long axis of the cell. This Cupriavidus metallidurans (strain ATCC 43123 / DSM 2839 / NBRC 102507 / CH34) (Ralstonia metallidurans) protein is Cell division topological specificity factor.